A 539-amino-acid chain; its full sequence is Chaperonin GroEL 2 (539 aa).

ATP is bound by residues 29-32 (TIGP), 86-90 (DGTTT), Gly-414, 479-481 (DAL), and Asp-495.

This sequence belongs to the chaperonin (HSP60) family. Forms a cylinder of 14 subunits composed of two heptameric rings stacked back-to-back. Interacts with the co-chaperonin GroES.

The protein resides in the cytoplasm. The catalysed reaction is ATP + H2O + a folded polypeptide = ADP + phosphate + an unfolded polypeptide.. Functionally, together with its co-chaperonin GroES, plays an essential role in assisting protein folding. The GroEL-GroES system forms a nano-cage that allows encapsulation of the non-native substrate proteins and provides a physical environment optimized to promote and accelerate protein folding. The protein is Chaperonin GroEL 2 of Synechococcus sp. (strain JA-2-3B'a(2-13)) (Cyanobacteria bacterium Yellowstone B-Prime).